A 357-amino-acid polypeptide reads, in one-letter code: Pre-mRNA-splicing factor RBM22 homolog (357 aa).

The segment at Arg153–Ile180 adopts a C3H1-type zinc-finger fold. Residues Asn222–Asn295 form the RRM domain.

The protein belongs to the SLT11 family. In terms of assembly, probable component of the spliceosome C complex.

It localises to the nucleus. In terms of biological role, involved in pre-mRNA splicing. Binds RNA. The chain is Pre-mRNA-splicing factor RBM22 homolog from Plasmodium falciparum (isolate 3D7).